The chain runs to 312 residues: Flavonol 3-sulfotransferase (312 aa).

59–64 is a binding site for 3'-phosphoadenylyl sulfate; that stretch reads KSGTTW. His-119 serves as the catalytic Proton acceptor. 3'-phosphoadenylyl sulfate is bound by residues Arg-141, Ser-149, Tyr-207, and 277 to 279; that span reads RKG.

Belongs to the sulfotransferase 1 family. As to expression, highest in shoot tips and lowest in mature leaves and roots.

The protein localises to the cytoplasm. In terms of biological role, sulfotransferase that utilizes 3'-phospho-5'-adenylyl sulfate (PAPS) as sulfonate donor to catalyze the sulfate conjugation of quercetin, rhamnetin and isorhamnetin but not kaempferol. O-sulfation of position 3 of flavonol. May play a role in auxin transport. The polypeptide is Flavonol 3-sulfotransferase (Flaveria bidentis (Coastal plain yellowtops)).